A 278-amino-acid chain; its full sequence is Orotidine 5'-phosphate decarboxylase (278 aa).

Residue Lys-96 is the Proton donor of the active site.

This sequence belongs to the OMP decarboxylase family. Type 2 subfamily.

It catalyses the reaction orotidine 5'-phosphate + H(+) = UMP + CO2. Its pathway is pyrimidine metabolism; UMP biosynthesis via de novo pathway; UMP from orotate: step 2/2. The polypeptide is Orotidine 5'-phosphate decarboxylase (pyrF) (Streptomyces coelicolor (strain ATCC BAA-471 / A3(2) / M145)).